The following is an 85-amino-acid chain: Toxin BmKAEP (85 aa).

A signal peptide spans 1–21 (MKLFLLLVISASMLIDGLVNA). Residues 22-82 (DGYIRGSNGC…TWKSESNTCG (61 aa)) enclose the LCN-type CS-alpha/beta domain. 4 cysteine pairs are disulfide-bonded: Cys31-Cys81, Cys35-Cys56, Cys42-Cys63, and Cys46-Cys65. Gly82 carries the post-translational modification Glycine amide.

Expressed by the venom gland.

The protein localises to the secreted. Its function is as follows. Shows anti-epileptic activity. Shares high homology with depressant insect toxins, but shows very weak toxicity against mammals and insects and no obvious symptoms on insect larvae. May target voltage-gated sodium channel (Nav). The chain is Toxin BmKAEP from Olivierus martensii (Manchurian scorpion).